The following is a 224-amino-acid chain: Mammalian ependymin-related protein 1 (224 aa).

An N-terminal signal peptide occupies residues 1-37; sequence MPGRAPLRTVPGALGAWLLGGLWAWTLCGLCSLGAVG. 3 disulfides stabilise this stretch: Cys-42–Cys-172, Cys-88–Cys-222, and Cys-113–Cys-210. N-linked (GlcNAc...) asparagine glycans are attached at residues Asn-130 and Asn-182.

The protein belongs to the ependymin family. Homodimer. Post-translationally, N-glycosylated; the glycan contains mannose-6-phosphate moieties. In terms of tissue distribution, ubiquitous. Detected in brain, heart, skeletal muscle, kidney, testis, ovary and prostate.

It is found in the lysosome lumen. It localises to the secreted. Binds anionic lipids and gangliosides at acidic pH. This chain is Mammalian ependymin-related protein 1 (EPDR1), found in Homo sapiens (Human).